Reading from the N-terminus, the 287-residue chain is Large ribosomal subunit protein uL2 (287 aa).

A disordered region spans residues 221-287; it reads RGSVMNPCDH…SKRSRGGRDS (67 aa). Basic residues predominate over residues 258–287; sequence KTRKKNKPSNKLVVRRRRRISKRSRGGRDS.

It belongs to the universal ribosomal protein uL2 family. As to quaternary structure, part of the 50S ribosomal subunit. Forms a bridge to the 30S subunit in the 70S ribosome.

Functionally, one of the primary rRNA binding proteins. Required for association of the 30S and 50S subunits to form the 70S ribosome, for tRNA binding and peptide bond formation. It has been suggested to have peptidyltransferase activity; this is somewhat controversial. Makes several contacts with the 16S rRNA in the 70S ribosome. The chain is Large ribosomal subunit protein uL2 from Prochlorococcus marinus subsp. pastoris (strain CCMP1986 / NIES-2087 / MED4).